The primary structure comprises 343 residues: Probable F-box protein At1g67455 (343 aa).

The F-box domain occupies 1 to 46 (MMISDLPEDMVEEILSRVSIISLGALRWNDLSKARVICKAEARQQF).

The protein is Probable F-box protein At1g67455 of Arabidopsis thaliana (Mouse-ear cress).